Consider the following 706-residue polypeptide: Forkhead box protein P2 (706 aa).

The span at 1–28 (MMQESATETISNSSMNQNGMSTLSSQLD) shows a compositional bias: polar residues. 2 disordered regions span residues 1-45 (MMQE…SEVS) and 275-305 (IKHG…ITHH). Positions 287 to 296 (SSSTTSTTTS) are enriched in low complexity. Residues 337-362 (GVCKWPGCENICEDFGQFLKHLNNEH) form a C2H2-type zinc finger. Residues 379–400 (VQQLEIQLSKERERLQAMMTHL) are leucine-zipper. Positions 413 to 417 (PLNLV) are ctbp1-binding. The segment at residues 495–585 (RPPFTYATLI…SQKITASPTL (91 aa)) is a DNA-binding region (fork-head). The segment at 672 to 706 (DDEDCPMSLVTTANHSPELEEDRELEEEPLSEDLE) is disordered. Over residues 690-706 (LEEDRELEEEPLSEDLE) the composition is skewed to acidic residues.

In terms of assembly, dimerization is required for DNA-binding. As to expression, at stage 15, expressed in the anterior/superior eye field and the caudal branchial arch. At later stages, expression persists in the retina and in the caudal branchial arch. Expressed in the pronephros and the tip of the tail. Beginning with stage 35, expression in the brain is localized to distinct subdomains of the anterior prosencephalon, the medial mesencephalon and to lateral domains of the hindbrain.

The protein localises to the nucleus. In terms of biological role, transcriptional repressor. The protein is Forkhead box protein P2 of Xenopus laevis (African clawed frog).